The chain runs to 179 residues: MKIMARKNQKAPWEEEEEIIWVSKTEMKNDMEDLQKLGEELVGLKPSVLAKFPLSDDLREAINDAQRFKNEAKRRQLQFIGKLMRNEDPEPIQLALDKIRNKHSQATAALHKLETLRDRMIEEGDAVIEEVMVKYPDADRQRFRQLARQAKKEKASNKPPKAFREIFQILKDLYLNEDL.

Belongs to the DarP family.

The protein resides in the cytoplasm. Member of a network of 50S ribosomal subunit biogenesis factors which assembles along the 30S-50S interface, preventing incorrect 23S rRNA structures from forming. Promotes peptidyl transferase center (PTC) maturation. The polypeptide is Dual-action ribosomal maturation protein DarP (Aliivibrio fischeri (strain ATCC 700601 / ES114) (Vibrio fischeri)).